Reading from the N-terminus, the 417-residue chain is CinA-like protein (417 aa).

This sequence belongs to the CinA family.

The chain is CinA-like protein from Leptospira biflexa serovar Patoc (strain Patoc 1 / Ames).